A 256-amino-acid chain; its full sequence is ATG8-interacting protein 1 (256 aa).

The AIM (Atg8-family-interacting motif) signature appears at 14–17 (WEVV). A helical membrane pass occupies residues 181–200 (ANAIWSLFFAAAVTGLVVLG). The short motif at 208 to 211 (WQVL) is the AIM (Atg8-family-interacting motif) element.

In terms of assembly, interacts with ATG8F. Interacts with ATG8H. Interacts with APE1 and PSBS/NPQ4.

It is found in the endoplasmic reticulum membrane. Its subcellular location is the membrane. It localises to the plastid. The protein resides in the chloroplast membrane. Its function is as follows. Involved in a special stress-induced plastid-to-vacuole protein trafficking pathway. Interacts with ATG8F in plastid bodies to subsequently enable their delivery to the vacuole by an autophagic pathway. Interacts with the plastid proteins APE1 and PSBS/NPQ4 and may recruit them as cargo into plastid bodies that may be recognized by the autophagy machinery for degradation in the vacuole. Involved in the alleviation of damage caused by salt stress during plant development, probably through its involvement in plastid-to-vacuole and ER-to-vacuole trafficking. Plays a role in seed germination in response to exogenous abscisic acid (ABA) treatment. The polypeptide is ATG8-interacting protein 1 (Arabidopsis thaliana (Mouse-ear cress)).